The following is a 155-amino-acid chain: Interleukin-36 receptor antagonist protein (155 aa).

A disulfide bond links cysteine 8 and cysteine 154.

It belongs to the IL-1 family. As to quaternary structure, interacts with cargo receptor TMED10; the interaction mediates the translocation from the cytoplasm into the ERGIC (endoplasmic reticulum-Golgi intermediate compartment) and thereby secretion. In terms of tissue distribution, predominantly expressed in skin keratinocytes but not in fibroblasts, endothelial cells or melanocytes. Detected also in the spleen, brain leukocyte and macrophage cell types. Increased in lesional psoriasis skin.

The protein resides in the cytoplasm. The protein localises to the secreted. Functionally, inhibits the activity of interleukin-36 (IL36A,IL36B and IL36G) by binding to receptor IL1RL2 and preventing its association with the coreceptor IL1RAP for signaling. Part of the IL-36 signaling system that is thought to be present in epithelial barriers and to take part in local inflammatory response; similar to the IL-1 system with which it shares the coreceptor. Proposed to play a role in skin inflammation. May be involved in the innate immune response to fungal pathogens, such as Aspergillus fumigatus. May activate an anti-inflammatory signaling pathway by recruiting SIGIRR. This chain is Interleukin-36 receptor antagonist protein, found in Homo sapiens (Human).